We begin with the raw amino-acid sequence, 118 residues long: Protein LH1 (118 aa).

The protein is Protein LH1 of Snake adenovirus serotype 1 (SnAdV-1).